Here is a 149-residue protein sequence, read N- to C-terminus: Large ribosomal subunit protein bL9 (149 aa).

It belongs to the bacterial ribosomal protein bL9 family.

In terms of biological role, binds to the 23S rRNA. The protein is Large ribosomal subunit protein bL9 of Amoebophilus asiaticus (strain 5a2).